A 288-amino-acid chain; its full sequence is Cyclin-dependent kinase 2 homolog (288 aa).

One can recognise a Protein kinase domain in the interval 4–284 (YHGLEKIGEG…AKQAIEHPYF (281 aa)). ATP is bound by residues 10 to 18 (IGEGTYGVV) and lysine 32. Threonine 14 is subject to Phosphothreonine. Position 15 is a phosphotyrosine (tyrosine 15). Aspartate 125 functions as the Proton acceptor in the catalytic mechanism. Threonine 158 carries the post-translational modification Phosphothreonine.

The protein belongs to the protein kinase superfamily. CMGC Ser/Thr protein kinase family. CDC2/CDKX subfamily. In terms of assembly, may form a complex composed of at least the catalytic subunit CRK2 and a cyclin. Mg(2+) is required as a cofactor.

The protein localises to the cytoplasm. The catalysed reaction is L-seryl-[protein] + ATP = O-phospho-L-seryl-[protein] + ADP + H(+). The enzyme catalyses L-threonyl-[protein] + ATP = O-phospho-L-threonyl-[protein] + ADP + H(+). It carries out the reaction [DNA-directed RNA polymerase] + ATP = phospho-[DNA-directed RNA polymerase] + ADP + H(+). Its activity is regulated as follows. Phosphorylation at Thr-14 or Tyr-15 inactivates the enzyme, while phosphorylation at Thr-158 activates it. Serine/threonine-protein kinase. Involved in the control of the cell cycle. Required for entry into S-phase and mitosis. Probable component of the kinase complex that phosphorylates the repetitive C-terminus of RNA polymerase II. The polypeptide is Cyclin-dependent kinase 2 homolog (Plasmodium berghei (strain Anka)).